The primary structure comprises 309 residues: Putative HTH-type transcriptional regulatory protein AF_1787 (309 aa).

The HTH cro/C1-type domain maps to Ile131–Ile185. Positions Val142–Glu161 form a DNA-binding region, H-T-H motif.

The polypeptide is Putative HTH-type transcriptional regulatory protein AF_1787 (Archaeoglobus fulgidus (strain ATCC 49558 / DSM 4304 / JCM 9628 / NBRC 100126 / VC-16)).